Here is a 154-residue protein sequence, read N- to C-terminus: 6,7-dimethyl-8-ribityllumazine synthase (154 aa).

5-amino-6-(D-ribitylamino)uracil is bound by residues phenylalanine 23, 57–59, and 81–83; these read AFE and AVI. 86–87 is a binding site for (2S)-2-hydroxy-3-oxobutyl phosphate; it reads AT. The active-site Proton donor is histidine 89. 5-amino-6-(D-ribitylamino)uracil is bound at residue phenylalanine 114. Arginine 128 serves as a coordination point for (2S)-2-hydroxy-3-oxobutyl phosphate.

It belongs to the DMRL synthase family.

It carries out the reaction (2S)-2-hydroxy-3-oxobutyl phosphate + 5-amino-6-(D-ribitylamino)uracil = 6,7-dimethyl-8-(1-D-ribityl)lumazine + phosphate + 2 H2O + H(+). The protein operates within cofactor biosynthesis; riboflavin biosynthesis; riboflavin from 2-hydroxy-3-oxobutyl phosphate and 5-amino-6-(D-ribitylamino)uracil: step 1/2. Functionally, catalyzes the formation of 6,7-dimethyl-8-ribityllumazine by condensation of 5-amino-6-(D-ribitylamino)uracil with 3,4-dihydroxy-2-butanone 4-phosphate. This is the penultimate step in the biosynthesis of riboflavin. The polypeptide is 6,7-dimethyl-8-ribityllumazine synthase (Syntrophus aciditrophicus (strain SB)).